Consider the following 387-residue polypeptide: Patatin group D-2 (387 aa).

Positions 1–23 are cleaved as a signal peptide; the sequence is MATTKSFLILIVMILATTSSTFA. One can recognise a PNPLA domain in the interval 32-230; sequence LSIDGGGIKG…TVADPALLSI (199 aa). A GXGXXG motif is present at residues 36–41; that stretch reads GGGIKG. The short motif at 75-79 is the GXSXG element; sequence GTSTG. Residue S77 is the Nucleophile of the active site. Residue N115 is glycosylated (N-linked (GlcNAc...) asparagine). The active-site Proton acceptor is the D216. The short motif at 216–218 is the DGA/G element; that stretch reads DGA. A coiled-coil region spans residues 361–385; it reads ETYEEALKRFAKLLSDRKKLRANKA.

Belongs to the patatin family. Tuber.

It is found in the vacuole. In terms of biological role, probable lipolytic acyl hydrolase (LAH), an activity which is thought to be involved in the response of tubers to pathogens. The sequence is that of Patatin group D-2 from Solanum tuberosum (Potato).